Here is a 178-residue protein sequence, read N- to C-terminus: Large ribosomal subunit protein uL6 (178 aa).

Belongs to the universal ribosomal protein uL6 family. In terms of assembly, part of the 50S ribosomal subunit.

This protein binds to the 23S rRNA, and is important in its secondary structure. It is located near the subunit interface in the base of the L7/L12 stalk, and near the tRNA binding site of the peptidyltransferase center. This chain is Large ribosomal subunit protein uL6, found in Streptococcus pyogenes serotype M3 (strain ATCC BAA-595 / MGAS315).